We begin with the raw amino-acid sequence, 377 residues long: Protein RecA (377 aa).

Residues 1–13 (MSNEGKPLQSTES) show a composition bias toward polar residues. The segment at 1–20 (MSNEGKPLQSTESTKIDAKS) is disordered. 82-89 (GPESSGKT) contacts ATP. The segment at 346-377 (GSEVSANSMRPLASAARQASSRPKLSQVSANG) is disordered. Positions 362–377 (RQASSRPKLSQVSANG) are enriched in polar residues.

It belongs to the RecA family.

Its subcellular location is the cytoplasm. In terms of biological role, can catalyze the hydrolysis of ATP in the presence of single-stranded DNA, the ATP-dependent uptake of single-stranded DNA by duplex DNA, and the ATP-dependent hybridization of homologous single-stranded DNAs. It interacts with LexA causing its activation and leading to its autocatalytic cleavage. In Prochlorococcus marinus (strain NATL1A), this protein is Protein RecA.